A 400-amino-acid chain; its full sequence is Cytochrome P450 BJ-1 homolog (400 aa).

Heme is bound at residue Cys-349.

The protein belongs to the cytochrome P450 family. Heme serves as cofactor.

Its function is as follows. Cytochromes P450 are a group of heme-thiolate monooxygenases. They oxidize a variety of structurally unrelated compounds, including steroids, fatty acids, and xenobiotics. The protein is Cytochrome P450 BJ-1 homolog (cyp112A2) of Sinorhizobium fredii (strain NBRC 101917 / NGR234).